We begin with the raw amino-acid sequence, 104 residues long: Pyrimidine/purine nucleoside phosphorylase (104 aa).

It belongs to the nucleoside phosphorylase PpnP family.

It carries out the reaction a purine D-ribonucleoside + phosphate = a purine nucleobase + alpha-D-ribose 1-phosphate. It catalyses the reaction adenosine + phosphate = alpha-D-ribose 1-phosphate + adenine. The enzyme catalyses cytidine + phosphate = cytosine + alpha-D-ribose 1-phosphate. The catalysed reaction is guanosine + phosphate = alpha-D-ribose 1-phosphate + guanine. It carries out the reaction inosine + phosphate = alpha-D-ribose 1-phosphate + hypoxanthine. It catalyses the reaction thymidine + phosphate = 2-deoxy-alpha-D-ribose 1-phosphate + thymine. The enzyme catalyses uridine + phosphate = alpha-D-ribose 1-phosphate + uracil. The catalysed reaction is xanthosine + phosphate = alpha-D-ribose 1-phosphate + xanthine. Catalyzes the phosphorolysis of diverse nucleosides, yielding D-ribose 1-phosphate and the respective free bases. Can use uridine, adenosine, guanosine, cytidine, thymidine, inosine and xanthosine as substrates. Also catalyzes the reverse reactions. The polypeptide is Pyrimidine/purine nucleoside phosphorylase (Hydrogenovibrio crunogenus (strain DSM 25203 / XCL-2) (Thiomicrospira crunogena)).